The sequence spans 471 residues: E3 SUMO-protein ligase EGR2 (471 aa).

A compositionally biased stretch (low complexity) spans proline 127–proline 143. A disordered region spans residues proline 127 to alanine 177. Position 246 is an N6-acetyllysine; by EP300 (lysine 246). 2 disordered regions span residues glycine 273–alanine 301 and arginine 313–proline 336. Gly residues predominate over residues threonine 280 to glutamate 289. 3 consecutive C2H2-type zinc fingers follow at residues tyrosine 335–histidine 359, phenylalanine 365–histidine 387, and phenylalanine 393–histidine 415. Residues aspartate 406–proline 471 are disordered. The span at arginine 410–glutamate 420 shows a compositional bias: basic residues. The span at serine 424–serine 437 shows a compositional bias: low complexity.

It belongs to the EGR C2H2-type zinc-finger protein family. As to quaternary structure, interacts with HCFC1. Interacts with WWP2. Interacts with UBC9. Interacts with CITED1. Interacts (via phosphorylated form) with SFN. Post-translationally, ubiquitinated by WWP2 leading to proteasomal degradation. In terms of processing, acetylated at Lys-246. May be deacetylated by HDAC6, HDAC10 or SIRT1.

It localises to the nucleus. It participates in protein modification; protein sumoylation. Functionally, sequence-specific DNA-binding transcription factor. Plays a role in hindbrain segmentation by regulating the expression of a subset of homeobox containing genes and in Schwann cell myelination by regulating the expression of genes involved in the formation and maintenance of myelin. Binds to two EGR2-consensus sites EGR2A (5'-CTGTAGGAG-3') and EGR2B (5'-ATGTAGGTG-3') in the HOXB3 enhancer and promotes HOXB3 transcriptional activation. Binds to specific DNA sites located in the promoter region of HOXA4, HOXB2 and ERBB2. Regulates hindbrain segmentation by controlling the expression of Hox genes, such as HOXA4, HOXB3 and HOXB2, and thereby specifying odd and even rhombomeres. Promotes the expression of HOXB3 in the rhombomere r5 in the hindbrain. Regulates myelination in the peripheral nervous system after birth, possibly by regulating the expression of myelin proteins, such as MPZ, and by promoting the differentiation of Schwann cells. Involved in the development of the jaw openener musculature, probably by playing a role in its innervation through trigeminal motor neurons. May play a role in adipogenesis, possibly by regulating the expression of CEBPB. In terms of biological role, E3 SUMO-protein ligase helping SUMO1 conjugation to its coregulators NAB1 and NAB2, whose sumoylation down-regulates EGR2 transcriptional activity. The chain is E3 SUMO-protein ligase EGR2 (EGR2) from Sus scrofa (Pig).